Consider the following 651-residue polypeptide: E3 SUMO-protein ligase PIAS1 (651 aa).

Ala2 is subject to N-acetylalanine. Positions 2-200 (ADSAELKQMV…KCDFTVQVQL (199 aa)) are required for interaction with MSX1. Residues 11-45 (VMSLRVSELQVLLGYAGRNKHGRKHELLTKALHLL) enclose the SAP domain. Residues 19–23 (LQVLL) carry the LXXLL motif motif. Residues Lys40 and Lys46 each participate in a glycyl lysine isopeptide (Lys-Gly) (interchain with G-Cter in SUMO2) cross-link. The short motif at 56–64 (KIKELYRRR) is the Nuclear localization signal element. The 165-residue stretch at 124-288 (HLTSALHPVH…SMAVYLVKQL (165 aa)) folds into the PINIT domain. Residues Lys137 and Lys238 each participate in a glycyl lysine isopeptide (Lys-Gly) (interchain with G-Cter in SUMO2) cross-link. Residues 320 to 405 (PDSEIATTSL…LKYCTDCDEI (86 aa)) form an SP-RING-type zinc finger. Zn(2+) contacts are provided by Cys351, His353, Cys374, and Cys377. Positions 368-380 (KKPTWVCPVCDKK) match the Nuclear localization signal motif. Residue Lys453 forms a Glycyl lysine isopeptide (Lys-Gly) (interchain with G-Cter in SUMO2) linkage. An SUMO1-binding region spans residues 462–473 (LTIDSSSDEEEE). The segment at 465-511 (DSSSDEEEEEPPAKRTCPSLSPTSPLSNKGILSLPHQASPVSRTPSL) is disordered. 4 positions are modified to phosphoserine: Ser467, Ser468, Ser483, and Ser485. The span at 482-491 (PSLSPTSPLS) shows a compositional bias: low complexity. Thr487 is subject to Phosphothreonine. Residues Ser488 and Ser491 each carry the phosphoserine modification. A Glycyl lysine isopeptide (Lys-Gly) (interchain with G-Cter in SUMO2) cross-link involves residue Lys493. Phosphoserine occurs at positions 503, 510, and 522. 2 repeat units span residues 520 to 523 (NTSL) and 557 to 560 (NTSL). Positions 520 to 615 (NTSLIQDYRH…GSSSGSNSSL (96 aa)) are 4 X 4 AA repeats of N-T-S-L. One copy of the 3; approximate repeat lies at 598-601 (STSL). A disordered region spans residues 600 to 630 (SLPATNGSSSGSNSSLVSSNSLRESHGHGVA). A compositionally biased stretch (low complexity) spans 605–621 (NGSSSGSNSSLVSSNSL). A 4; approximate repeat occupies 612–615 (NSSL).

This sequence belongs to the PIAS family. In terms of assembly, interacts with NR2C1; the interaction promotes its sumoylation. Interacts with DDX21, CSRP2, AXIN1, JUN, SATB2, PLAG1, TP53 and STAT1 (dimer), following IFNA1-stimulation. Interacts with SP3 (preferentially when SUMO-modified). Interacts with KLF8; the interaction results in SUMO ligation and repression of KLF8 transcriptional activity and of its cell cycle progression into G(1) phase. Interacts with CHUK/IKKA; this interaction induces PIAS1 phosphorylation. Interacts with PTK2/FAK1; the interaction promotes its sumoylation. Interacts with SUMO1, UBE2I, NCOA2 and AR. Interacts with NR2C1; the interaction promotes its sumoylation. Interacts with DDX5. Interacts with MTA1. Interacts with PML (isoform PML-12). Interacts with PRDM1. Interacts (via N-terminus) with MSX1 (via C-terminus); the interaction is required for the localization of both proteins to the nuclear periphery and specific binding of MSX1 to the core enhancer region in target gene promoters. Post-translationally, sumoylated. Expressed in kidney, heart, spleen, brain and cerebellum; weak expression, if any, in liver and lung.

It localises to the nucleus. Its subcellular location is the nucleus speckle. It is found in the PML body. The protein localises to the cytoplasm. The protein resides in the cytoskeleton. The catalysed reaction is S-ubiquitinyl-[E2 ubiquitin-conjugating enzyme]-L-cysteine + [acceptor protein]-L-lysine = [E2 ubiquitin-conjugating enzyme]-L-cysteine + N(6)-ubiquitinyl-[acceptor protein]-L-lysine.. It functions in the pathway protein modification; protein sumoylation. In terms of biological role, functions as an E3-type small ubiquitin-like modifier (SUMO) ligase, stabilizing the interaction between UBE2I and the substrate, and as a SUMO-tethering factor. Catalyzes sumoylation of various proteins, such as CEBPB, MRE11, MTA1, PTK2 and PML. Plays a crucial role as a transcriptional coregulation in various cellular pathways, including the STAT pathway, the p53 pathway and the steroid hormone signaling pathway. In vitro, binds A/T-rich DNA. The effects of this transcriptional coregulation, transactivation or silencing, may vary depending upon the biological context. Mediates sumoylation of MRE11, stabilizing MRE11 on chromatin during end resection. Sumoylates PML (at 'Lys-65' and 'Lys-160') and PML-RAR and promotes their ubiquitin-mediated degradation. PIAS1-mediated sumoylation of PML promotes its interaction with CSNK2A1/CK2 which in turn promotes PML phosphorylation and degradation. Enhances the sumoylation of MTA1 and may participate in its paralog-selective sumoylation. Plays a dynamic role in adipogenesis by promoting the SUMOylation and degradation of CEBPB. Mediates the nuclear mobility and localization of MSX1 to the nuclear periphery, whereby MSX1 is brought into the proximity of target myoblast differentiation factor genes. Also required for the binding of MSX1 to the core enhancer region in target gene promoter regions, independent of its sumoylation activity. Capable of binding to the core enhancer region TAAT box in the MYOD1 gene promoter. This Mus musculus (Mouse) protein is E3 SUMO-protein ligase PIAS1 (Pias1).